Here is a 186-residue protein sequence, read N- to C-terminus: Translation initiation factor IF-3 (186 aa).

The tract at residues 1–20 is disordered; that stretch reads MINRSAGKDRDRSRSGDKEL.

It belongs to the IF-3 family. Monomer.

It is found in the cytoplasm. In terms of biological role, IF-3 binds to the 30S ribosomal subunit and shifts the equilibrium between 70S ribosomes and their 50S and 30S subunits in favor of the free subunits, thus enhancing the availability of 30S subunits on which protein synthesis initiation begins. The sequence is that of Translation initiation factor IF-3 from Borrelia hermsii (strain HS1 / DAH).